The chain runs to 668 residues: Acetoin catabolism regulatory protein (668 aa).

One can recognise a Sigma-54 factor interaction domain in the interval 341-570 (LTGGDAALQL…NVLEYARAVC (230 aa)). Residues 369-376 (GETGSGKE) and 433-442 (ADGGTLFLDE) contribute to the ATP site. A compositionally biased stretch (low complexity) spans 586–606 (GPAPSAALPQPGPAQSPAAAP). Residues 586–611 (GPAPSAALPQPGPAQSPAAAPFDPHQ) form a disordered region. A DNA-binding region (H-T-H motif) is located at residues 630–649 (LSAVARQIGVSRMTLYRRME).

Its function is as follows. Required for sigma-54-dependent transcription of acoXABC. The sequence is that of Acetoin catabolism regulatory protein (acoR) from Cupriavidus necator (strain ATCC 17699 / DSM 428 / KCTC 22496 / NCIMB 10442 / H16 / Stanier 337) (Ralstonia eutropha).